Reading from the N-terminus, the 186-residue chain is Large ribosomal subunit protein uL10 (186 aa).

Belongs to the universal ribosomal protein uL10 family. As to quaternary structure, part of the ribosomal stalk of the 50S ribosomal subunit. The N-terminus interacts with L11 and the large rRNA to form the base of the stalk. The C-terminus forms an elongated spine to which L12 dimers bind in a sequential fashion forming a multimeric L10(L12)X complex.

Functionally, forms part of the ribosomal stalk, playing a central role in the interaction of the ribosome with GTP-bound translation factors. The polypeptide is Large ribosomal subunit protein uL10 (rplJ) (Streptomyces virginiae (Streptomyces cinnamonensis)).